The sequence spans 824 residues: Probable receptor-like protein kinase At5g24010 (824 aa).

The signal sequence occupies residues 1 to 24 (MAFPINLTQTLLFFFCPLLHLSFA). 5 N-linked (GlcNAc...) asparagine glycosylation sites follow: Asn6, Asn41, Asn204, Asn227, and Asn291. Residues 25–406 (AFTPTDNYLI…SSEVVSGKRN (382 aa)) lie on the Extracellular side of the membrane. Residues 407–427 (VVWIVVGSVLGGFVFLSLFFL) traverse the membrane as a helical segment. Over 428–824 (SVLCLCRRKN…FSQLMTNAGR (397 aa)) the chain is Cytoplasmic. The disordered stretch occupies residues 440 to 467 (TRSSESTGWTPLRRFRGSSNSRTTERTV). The span at 456–467 (GSSNSRTTERTV) shows a compositional bias: polar residues. Residues 489-764 (FDRSLVIGVG…VLWNLEHVLQ (276 aa)) form the Protein kinase domain. ATP-binding positions include 495–503 (IGVGGFGMV) and Lys517. Asp613 functions as the Proton acceptor in the catalytic mechanism. The disordered stretch occupies residues 777–803 (DYGDVTDPRTARQGLSNGSNIERDYGD).

This sequence belongs to the protein kinase superfamily. Ser/Thr protein kinase family.

It localises to the membrane. The protein is Probable receptor-like protein kinase At5g24010 of Arabidopsis thaliana (Mouse-ear cress).